The primary structure comprises 225 residues: Heptaprenylglyceryl phosphate synthase (225 aa).

Lysine 6 is a sn-glycerol 1-phosphate binding site. 2 residues coordinate Mg(2+): aspartate 8 and threonine 34. Sn-glycerol 1-phosphate is bound by residues 153-158, glycine 183, and 203-204; these read YVEYSG and GN.

Belongs to the GGGP/HepGP synthase family. Group I subfamily. As to quaternary structure, homodimer. It depends on Mg(2+) as a cofactor.

It carries out the reaction sn-glycerol 1-phosphate + all-trans-heptaprenyl diphosphate = 3-heptaprenyl-sn-glycero-1-phosphate + diphosphate. Its pathway is membrane lipid metabolism; glycerophospholipid metabolism. Its function is as follows. Prenyltransferase that catalyzes in vivo the transfer of the heptaprenyl moiety of heptaprenyl pyrophosphate (HepPP; 35 carbon atoms) to the C3 hydroxyl of sn-glycerol-1-phosphate (G1P), producing heptaprenylglyceryl phosphate (HepGP). This reaction is an ether-bond-formation step in the biosynthesis of archaea-type G1P-based membrane lipids found in Bacillales. This is Heptaprenylglyceryl phosphate synthase from Listeria monocytogenes serotype 4b (strain F2365).